Reading from the N-terminus, the 453-residue chain is Putative ABC transporter ATP-binding protein MM_0462 (453 aa).

An ABC transporter domain is found at Leu-4–Arg-239. Gly-37 to Ser-44 serves as a coordination point for ATP.

It belongs to the ABC transporter superfamily.

Its subcellular location is the cell membrane. Probably part of an ABC transporter complex. Responsible for energy coupling to the transport system. The polypeptide is Putative ABC transporter ATP-binding protein MM_0462 (Methanosarcina mazei (strain ATCC BAA-159 / DSM 3647 / Goe1 / Go1 / JCM 11833 / OCM 88) (Methanosarcina frisia)).